The following is a 226-amino-acid chain: Small ribosomal subunit protein uS3 (226 aa).

The KH type-2 domain maps to Ile-39 to Thr-109.

The protein belongs to the universal ribosomal protein uS3 family. As to quaternary structure, part of the 30S ribosomal subunit. Forms a tight complex with proteins S10 and S14.

Functionally, binds the lower part of the 30S subunit head. Binds mRNA in the 70S ribosome, positioning it for translation. The sequence is that of Small ribosomal subunit protein uS3 from Mycoplasmopsis synoviae (strain 53) (Mycoplasma synoviae).